The primary structure comprises 289 residues: BTB/POZ domain-containing protein KCTD7 (289 aa).

The segment at Met-1 to Ala-35 is disordered. The BTB domain occupies Glu-51–Gly-149.

In terms of assembly, interacts with CUL3.

The protein localises to the cell membrane. Its subcellular location is the cytoplasm. It is found in the cytosol. May be involved in the control of excitability of cortical neurons. This chain is BTB/POZ domain-containing protein KCTD7 (KCTD7), found in Homo sapiens (Human).